The primary structure comprises 701 residues: Pentatricopeptide repeat-containing protein At5g50390, chloroplastic (701 aa).

The transit peptide at 1–47 (MEIPLSRYQSIRLDEIRDSSSNPKVLTFPRKFSLRGRRWKNPFGRLS) directs the protein to the chloroplast. 12 PPR repeats span residues 86-116 (SGVT…LEIR), 122-156 (GVST…GFEP), 157-187 (EQYM…IPER), 188-218 (NLYS…MWEE), 223-257 (ETHT…GVVD), 258-288 (NTFV…MPEK), 289-323 (TTVA…GVSI), 324-358 (DQFT…GFES), 359-389 (EIVA…LPRK), 390-424 (NIIS…NVAP), 425-460 (NHVT…GIKP), and 461-491 (RAMH…APLK). The type E motif stretch occupies residues 496-571 (MWAALLNACR…MPACTWVEVG (76 aa)). The tract at residues 572-606 (DQTHSFLSGDRFDSYNETVKRQIYQKVDELMEEIS) is type E(+) motif; degenerate. Positions 607 to 701 (EYGYSEEEQH…EGKCSCGGYW (95 aa)) are type DYW motif.

The protein belongs to the PPR family. PCMP-H subfamily.

It localises to the plastid. Its subcellular location is the chloroplast. The protein is Pentatricopeptide repeat-containing protein At5g50390, chloroplastic (PCMP-H58) of Arabidopsis thaliana (Mouse-ear cress).